The following is a 1164-amino-acid chain: Shugoshin 2A (1164 aa).

Positions 62–113 (LSKEKENSRRITTEKMQLQKEVEKLNFENTFLRLKLNTLNKKLVEIESHVSN) form a coiled coil. Disordered stretches follow at residues 160–269 (SEND…VTMR), 287–314 (HQPT…NTQR), 390–492 (RKVK…PFSR), 521–541 (TFVI…DKDT), and 917–992 (PLDS…ETHG). Residues 182–198 (SKTSPDSTSSVSRQPSS) are compositionally biased toward low complexity. 2 stretches are compositionally biased toward polar residues: residues 238-247 (DQSPKSSLSE) and 288-299 (QPTSSPGSNWNN). The span at 390–412 (RKVKGASSDKKRESSKRECKDGS) shows a compositional bias: basic and acidic residues. Positions 443–472 (CISSTEQPSQVNTQKKRTLQNSSDQENIQN) are enriched in polar residues. Over residues 525 to 541 (RKSEKDNLFPNQEDKDT) the composition is skewed to basic and acidic residues. The span at 934 to 948 (GEQTNLPKMQKQSAG) shows a compositional bias: polar residues. Ser-1042 is subject to Phosphoserine. A disordered region spans residues 1092–1164 (ITTGTRNPHH…EPSLRSKMRR (73 aa)). Residues 1112–1125 (TSLVLVDTSSVSDT) are compositionally biased toward low complexity. The span at 1126–1140 (NPANPENESEGQSSH) shows a compositional bias: polar residues.

This sequence belongs to the shugoshin family. Part of an astrin (SPAG5)-kinastrin (SKAP) complex containing KNSTRN, SPAG5, PLK1, DYNLL1 and SGO2A. Interacts with CDCA8. Interacts with PPP2CA. As to expression, ubiquitously expressed in proliferating cells. Highly expressed in the testis and oocytes.

The protein resides in the nucleus. Its subcellular location is the chromosome. It localises to the centromere. It is found in the kinetochore. Functionally, cooperates with PPP2CA to protect centromeric cohesin from separase-mediated cleavage in oocytes specifically during meiosis I. Has a crucial role in protecting REC8 at centromeres from cleavage by separase. During meiosis, protects centromeric cohesion complexes until metaphase II/anaphase II transition, preventing premature release of meiosis-specific REC8 cohesin complexes from anaphase I centromeres. Is thus essential for an accurate gametogenesis. May act by targeting PPP2CA to centromeres, thus leading to cohesin dephosphorylation. Essential for recruiting KIF2C to the inner centromere and for correcting defective kinetochore attachments. Involved in centromeric enrichment of AUKRB in prometaphase. This is Shugoshin 2A from Mus musculus (Mouse).